Reading from the N-terminus, the 1031-residue chain is Protein translocase subunit SecA (1031 aa).

ATP-binding positions include Gln143, Gly161–Thr165, and Asp661. Over residues Lys963–Ser973 the composition is skewed to basic and acidic residues. The segment at Lys963–Arg1031 is disordered. The Zn(2+) site is built by Cys1017, Cys1019, Cys1028, and Cys1029.

It belongs to the SecA family. As to quaternary structure, monomer and homodimer. Part of the essential Sec protein translocation apparatus which comprises SecA, SecYEG and auxiliary proteins SecDF. Other proteins may also be involved. It depends on Zn(2+) as a cofactor.

The protein localises to the cell inner membrane. It is found in the cytoplasm. The enzyme catalyses ATP + H2O + cellular proteinSide 1 = ADP + phosphate + cellular proteinSide 2.. Functionally, part of the Sec protein translocase complex. Interacts with the SecYEG preprotein conducting channel. Has a central role in coupling the hydrolysis of ATP to the transfer of proteins into and across the cell membrane, serving as an ATP-driven molecular motor driving the stepwise translocation of polypeptide chains across the membrane. This Prosthecochloris aestuarii (strain DSM 271 / SK 413) protein is Protein translocase subunit SecA.